The following is a 400-amino-acid chain: Argininosuccinate synthase (400 aa).

ATP contacts are provided by residues 11 to 19 (AYSGGLDTS) and Ala-38. L-citrulline is bound by residues Tyr-89 and Ser-94. Gly-119 contributes to the ATP binding site. Thr-121, Asn-125, and Asp-126 together coordinate L-aspartate. Asn-125 serves as a coordination point for L-citrulline. Residues Arg-129, Ser-178, Ser-187, Glu-263, and Tyr-275 each coordinate L-citrulline.

Belongs to the argininosuccinate synthase family. Type 1 subfamily. Homotetramer.

The protein localises to the cytoplasm. The enzyme catalyses L-citrulline + L-aspartate + ATP = 2-(N(omega)-L-arginino)succinate + AMP + diphosphate + H(+). The protein operates within amino-acid biosynthesis; L-arginine biosynthesis; L-arginine from L-ornithine and carbamoyl phosphate: step 2/3. This chain is Argininosuccinate synthase, found in Desulfatibacillum aliphaticivorans.